The following is a 535-amino-acid chain: Dual specificity mitogen-activated protein kinase kinase 7 (535 aa).

Alanine 2 carries the post-translational modification N-acetylalanine. The stretch at 2–30 forms a coiled coil; that stretch reads AASSLEQKLSRLEAKLKQENREARRRIDL. A d domain region spans residues 37–73; that stretch reads QRPRPIIVITLSPAPAPSQRAALQLPLANDGGSRSPS. The interval 63-93 is disordered; sequence LANDGGSRSPSSESSPQHPTPPTRPRHMLGL. Over residues 69-79 the composition is skewed to low complexity; sequence SRSPSSESSPQ. Positions 136–396 constitute a Protein kinase domain; it reads LENLGEMGSG…YNKLLEHSFI (261 aa). Residues 142–150 and lysine 165 contribute to the ATP site; that span reads MGSGTCGQV. The active-site Proton acceptor is the aspartate 259. Phosphoserine; by MAP3K is present on serine 287. Phosphothreonine; by MAP3K is present on threonine 291. Residues 393–416 form a DVD domain region; the sequence is HSFIKHYEILEVDVASWFKDVMAK. Phosphoserine is present on serine 427.

It belongs to the protein kinase superfamily. STE Ser/Thr protein kinase family. MAP kinase kinase subfamily. Interacts with RASSF7, the interaction promotes phosphorylation. Interacts with VRK2. Interacts (via its D domain) with its substrates MAPK8/JNK1, MAPK9/JNK2 and MAPK10/JNK3. Interacts (via its DVD domain) with MAP3Ks activators like MAP3K5/ASK1 and MAP3K1/MEKK1. Interacts with SH3RF1, MAPK8IP1/JIP1, MAPK8IP2/JIP2 and MAPK8IP3/JIP3 scaffold proteins. Found in a complex with SH3RF1, RAC1, MAP3K11/MLK3, MAPK8IP1/JIP1 and MAPK8/JNK1. Found in a complex with SH3RF1, RAC2, MAP3K7/TAK1, MAPK8IP1/JIP1, MAPK8/JNK1 and MAPK9/JNK2. The cofactor is Mg(2+). Post-translationally, activated by phosphorylation on Ser-287 and Thr-291 by MAP kinase kinase kinases (MAP3Ks). Expressed at high levels in brain, lung, liver, skeletal muscle, kidney, and testis and at lower levels in the heart and spleen.

It is found in the nucleus. The protein resides in the cytoplasm. It catalyses the reaction L-seryl-[protein] + ATP = O-phospho-L-seryl-[protein] + ADP + H(+). The enzyme catalyses L-threonyl-[protein] + ATP = O-phospho-L-threonyl-[protein] + ADP + H(+). The catalysed reaction is L-tyrosyl-[protein] + ATP = O-phospho-L-tyrosyl-[protein] + ADP + H(+). Its activity is regulated as follows. Activated by phosphorylation by specific MAP kinase kinase kinases such as MAP3K1/MEKK1, MAP3K3/MEKK3, MAP3K11/MLK3 and MAP3K12/DLK. Isoforms 3 and 4 have lower basal activity but a higher level of inducible activation, than isoforms 2, 6, 7 and 8. Dual specificity protein kinase which acts as an essential component of the MAP kinase signal transduction pathway. Essential component of the stress-activated protein kinase/c-Jun N-terminal kinase (SAP/JNK) signaling pathway. With MAP2K4/MKK4, is the one of the only known kinase to directly activate the stress-activated protein kinase/c-Jun N-terminal kinases MAPK8/JNK1, MAPK9/JNK2 and MAPK10/JNK3. MAP2K4/MKK4 and MAP2K7/MKK7 both activate the JNKs by phosphorylation, but they differ in their preference for the phosphorylation site in the Thr-Pro-Tyr motif. MAP2K4/MKK4 shows preference for phosphorylation of the Tyr residue and MAP2K7/MKK7 for the Thr residue. The monophosphorylation of JNKs on the Thr residue is sufficient to increase JNK activity indicating that MAP2K7/MKK7 is important to trigger JNK activity, while the additional phosphorylation of the Tyr residue by MAP2K4/MKK4 ensures optimal JNK activation. Has a specific role in JNK signal transduction pathway activated by pro-inflammatory cytokines. The MKK/JNK signaling pathway is also involved in mitochondrial death signaling pathway, including the release cytochrome c, leading to apoptosis. Part of a non-canonical MAPK signaling pathway, composed of the upstream MAP3K12 kinase and downstream MAP kinases MAPK1/ERK2 and MAPK3/ERK1, that enhances the AP-1-mediated transcription of APP in response to APOE. This Mus musculus (Mouse) protein is Dual specificity mitogen-activated protein kinase kinase 7.